Consider the following 140-residue polypeptide: Putative pre-16S rRNA nuclease (140 aa).

It belongs to the YqgF nuclease family.

The protein resides in the cytoplasm. In terms of biological role, could be a nuclease involved in processing of the 5'-end of pre-16S rRNA. The polypeptide is Putative pre-16S rRNA nuclease (Aeromonas hydrophila).